The primary structure comprises 280 residues: uncharacterized protein (280 aa).

The next 3 membrane-spanning stretches (helical) occupy residues 15-35, 68-88, and 94-114; these read IVDILLVAVILWIGVFIINRL, IGFIFYVISLFVHDFGKILAG, and IVIGFGAQSLIKDVLAGVFLI.

This sequence belongs to the MscS (TC 1.A.23) family.

It is found in the cell membrane. Functionally, may play a role in resistance to osmotic downshock. This is an uncharacterized protein from Bacillus subtilis (strain 168).